A 196-amino-acid polypeptide reads, in one-letter code: Crossover junction endodeoxyribonuclease RuvC (196 aa).

Residues D23, E83, and H156 contribute to the active site. Mg(2+)-binding residues include D23, E83, and H156.

The protein belongs to the RuvC family. Homodimer which binds Holliday junction (HJ) DNA. The HJ becomes 2-fold symmetrical on binding to RuvC with unstacked arms; it has a different conformation from HJ DNA in complex with RuvA. In the full resolvosome a probable DNA-RuvA(4)-RuvB(12)-RuvC(2) complex forms which resolves the HJ. Mg(2+) is required as a cofactor.

Its subcellular location is the cytoplasm. It carries out the reaction Endonucleolytic cleavage at a junction such as a reciprocal single-stranded crossover between two homologous DNA duplexes (Holliday junction).. In terms of biological role, the RuvA-RuvB-RuvC complex processes Holliday junction (HJ) DNA during genetic recombination and DNA repair. Endonuclease that resolves HJ intermediates. Cleaves cruciform DNA by making single-stranded nicks across the HJ at symmetrical positions within the homologous arms, yielding a 5'-phosphate and a 3'-hydroxyl group; requires a central core of homology in the junction. The consensus cleavage sequence is 5'-(A/T)TT(C/G)-3'. Cleavage occurs on the 3'-side of the TT dinucleotide at the point of strand exchange. HJ branch migration catalyzed by RuvA-RuvB allows RuvC to scan DNA until it finds its consensus sequence, where it cleaves and resolves the cruciform DNA. This Treponema pallidum (strain Nichols) protein is Crossover junction endodeoxyribonuclease RuvC.